The primary structure comprises 295 residues: uncharacterized protein (295 aa).

A Sigma-54 factor interaction domain is found at 4-233 (IVVKSMAMEK…LQNTIERLVL (230 aa)).

This is an uncharacterized protein from Pseudomonas sp. (strain NS671).